The chain runs to 331 residues: Light-harvesting complex I LH35 proteins (331 aa).

Its subcellular location is the plastid. It localises to the chloroplast. The polypeptide is Light-harvesting complex I LH35 proteins (Euglena gracilis).